The following is an 89-amino-acid chain: Dynein light chain 2, cytoplasmic (89 aa).

Belongs to the dynein light chain family.

It localises to the cytoplasm. Its subcellular location is the cytoskeleton. Its function is as follows. Acts as a non-catalytic accessory component of a dynein complex. In Drosophila melanogaster (Fruit fly), this protein is Dynein light chain 2, cytoplasmic (Cdlc2).